Consider the following 320-residue polypeptide: Tetraspanin-32 (320 aa).

4 consecutive transmembrane segments (helical) span residues 14–34, 60–80, 90–110, and 203–223; these read MLVT…MVTL, WAFS…VLSA, LMAG…QVVF, and SIGL…WFAI.

This sequence belongs to the tetraspanin (TM4SF) family. As to expression, expressed ubiquitously at low levels. High levels of expression are confined to hematopoietic tissues including peripheral blood leukocytes, thymus and spleen.

Its subcellular location is the membrane. The protein is Tetraspanin-32 (TSPAN32) of Homo sapiens (Human).